A 419-amino-acid polypeptide reads, in one-letter code: UDP-N-acetylglucosamine 1-carboxyvinyltransferase 2 (419 aa).

Phosphoenolpyruvate is bound at residue K22–N23. Residue R92 participates in UDP-N-acetyl-alpha-D-glucosamine binding. The active-site Proton donor is the C116. The residue at position 116 (C116) is a 2-(S-cysteinyl)pyruvic acid O-phosphothioketal. Residues R121–L125, D306, and I328 each bind UDP-N-acetyl-alpha-D-glucosamine.

This sequence belongs to the EPSP synthase family. MurA subfamily.

Its subcellular location is the cytoplasm. The enzyme catalyses phosphoenolpyruvate + UDP-N-acetyl-alpha-D-glucosamine = UDP-N-acetyl-3-O-(1-carboxyvinyl)-alpha-D-glucosamine + phosphate. Its pathway is cell wall biogenesis; peptidoglycan biosynthesis. Its function is as follows. Cell wall formation. Adds enolpyruvyl to UDP-N-acetylglucosamine. This Streptococcus pyogenes serotype M18 (strain MGAS8232) protein is UDP-N-acetylglucosamine 1-carboxyvinyltransferase 2.